The chain runs to 429 residues: 3-phosphoshikimate 1-carboxyvinyltransferase (429 aa).

The 3-phosphoshikimate site is built by Lys11, Ser12, and Arg16. Position 11 (Lys11) interacts with phosphoenolpyruvate. The phosphoenolpyruvate site is built by Gly82 and Arg110. Ser155, Gln157, Asp302, and Lys329 together coordinate 3-phosphoshikimate. Gln157 serves as a coordination point for phosphoenolpyruvate. The Proton acceptor role is filled by Asp302. Phosphoenolpyruvate contacts are provided by Arg333 and Arg385.

This sequence belongs to the EPSP synthase family. In terms of assembly, monomer.

It is found in the cytoplasm. The catalysed reaction is 3-phosphoshikimate + phosphoenolpyruvate = 5-O-(1-carboxyvinyl)-3-phosphoshikimate + phosphate. It participates in metabolic intermediate biosynthesis; chorismate biosynthesis; chorismate from D-erythrose 4-phosphate and phosphoenolpyruvate: step 6/7. Catalyzes the transfer of the enolpyruvyl moiety of phosphoenolpyruvate (PEP) to the 5-hydroxyl of shikimate-3-phosphate (S3P) to produce enolpyruvyl shikimate-3-phosphate and inorganic phosphate. The protein is 3-phosphoshikimate 1-carboxyvinyltransferase of Helicobacter pylori (strain HPAG1).